Here is a 930-residue protein sequence, read N- to C-terminus: Isoleucine--tRNA ligase (930 aa).

The short motif at 57–67 (PYANGNIHVGH) is the 'HIGH' region element. Glu-554 lines the L-isoleucyl-5'-AMP pocket. The 'KMSKS' region motif lies at 595–599 (KMSKS). Residue Lys-598 coordinates ATP. Cys-888, Cys-891, Cys-908, and Cys-911 together coordinate Zn(2+).

Belongs to the class-I aminoacyl-tRNA synthetase family. IleS type 1 subfamily. In terms of assembly, monomer. Requires Zn(2+) as cofactor.

It localises to the cytoplasm. It catalyses the reaction tRNA(Ile) + L-isoleucine + ATP = L-isoleucyl-tRNA(Ile) + AMP + diphosphate. Catalyzes the attachment of isoleucine to tRNA(Ile). As IleRS can inadvertently accommodate and process structurally similar amino acids such as valine, to avoid such errors it has two additional distinct tRNA(Ile)-dependent editing activities. One activity is designated as 'pretransfer' editing and involves the hydrolysis of activated Val-AMP. The other activity is designated 'posttransfer' editing and involves deacylation of mischarged Val-tRNA(Ile). This is Isoleucine--tRNA ligase from Streptococcus pneumoniae (strain Taiwan19F-14).